A 568-amino-acid polypeptide reads, in one-letter code: Keratin, type I cytoskeletal 10 (568 aa).

Positions 1–15 are enriched in low complexity; that stretch reads MSVRYSSSKQYSSSR. The segment at 1-31 is disordered; it reads MSVRYSSSKQYSSSRSGGGGGGGGGSSFRIS. The tract at residues 1 to 135 is head; that stretch reads MSVRYSSSKQ…GGDGGLLSGN (135 aa). Phosphoserine occurs at positions 14, 16, 36, 47, 50, and 160. The span at 16 to 26 shows a compositional bias: gly residues; sequence SGGGGGGGGGS. The tract at residues 136 to 171 is coil 1A; the sequence is EKVTMQNLNDRLASYLDKVRALEESNYELEGKIKEW. The 315-residue stretch at 136 to 450 folds into the IF rod domain; that stretch reads EKVTMQNLND…SLLEGEGSSG (315 aa). The interval 172–192 is linker 1; that stretch reads YEKHGNSSQRAPRDYSKYYQT. The segment at 193-284 is coil 1B; sequence IEDLKNQILN…KNHEEEMRDL (92 aa). The tract at residues 285–307 is linker 12; it reads QNVSTGDVNVEMNAAPGVDLTEL. A coil 2 region spans residues 308 to 446; the sequence is LNNMRNQYEQ…QTYRSLLEGE (139 aa). The segment at 447 to 568 is tail; the sequence is GSSGGGGYGG…GESSSKGPRY (122 aa). Over residues 485–546 the composition is skewed to gly residues; it reads GGGSSGGGGH…GGGYGGGSSS (62 aa). Positions 485–568 are disordered; that stretch reads GGGSSGGGGH…GESSSKGPRY (84 aa). The segment covering 547–568 has biased composition (low complexity); that stretch reads SGGHKSSSSGSVGESSSKGPRY.

This sequence belongs to the intermediate filament family. Heterotetramer of two type I and two type II keratins. Heterodimer with KRT1. Two heterodimers of KRT1 and KRT10 form a heterotetramer. The KRT10 subunit in the heterotetramer is probably disulfide-linked. In terms of tissue distribution, expressed in skin.

The protein localises to the secreted. It is found in the extracellular space. It localises to the cell surface. Its subcellular location is the cytoplasm. Its function is as follows. Plays a role in the establishment of the epidermal barrier on plantar skin. Involved in the maintenance of cell layer development and keratin filament bundles in suprabasal cells of the epithelium. This Canis lupus familiaris (Dog) protein is Keratin, type I cytoskeletal 10.